Reading from the N-terminus, the 146-residue chain is Small ribosomal subunit protein uS5 (146 aa).

The S5 DRBM domain maps to 8–71 (FQEAIVKIGR…DDAFKSLVTV (64 aa)).

It belongs to the universal ribosomal protein uS5 family. As to quaternary structure, part of the 30S ribosomal subunit. Contacts proteins S4 and S8.

With S4 and S12 plays an important role in translational accuracy. Functionally, located at the back of the 30S subunit body where it stabilizes the conformation of the head with respect to the body. This is Small ribosomal subunit protein uS5 from Aliarcobacter butzleri (strain RM4018) (Arcobacter butzleri).